A 289-amino-acid polypeptide reads, in one-letter code: Acetyl-coenzyme A carboxylase carboxyl transferase subunit beta (289 aa).

The CoA carboxyltransferase N-terminal domain maps to 28 to 289 (VMTKCPKCKK…QGGGMAVWQS (262 aa)). 4 residues coordinate Zn(2+): Cys32, Cys35, Cys51, and Cys54. A C4-type zinc finger spans residues 32–54 (CPKCKKIMYTKELLKNLKVCVNC).

It belongs to the AccD/PCCB family. In terms of assembly, acetyl-CoA carboxylase is a heterohexamer composed of biotin carboxyl carrier protein (AccB), biotin carboxylase (AccC) and two subunits each of ACCase subunit alpha (AccA) and ACCase subunit beta (AccD). Zn(2+) serves as cofactor.

It is found in the cytoplasm. It catalyses the reaction N(6)-carboxybiotinyl-L-lysyl-[protein] + acetyl-CoA = N(6)-biotinyl-L-lysyl-[protein] + malonyl-CoA. The protein operates within lipid metabolism; malonyl-CoA biosynthesis; malonyl-CoA from acetyl-CoA: step 1/1. Component of the acetyl coenzyme A carboxylase (ACC) complex. Biotin carboxylase (BC) catalyzes the carboxylation of biotin on its carrier protein (BCCP) and then the CO(2) group is transferred by the transcarboxylase to acetyl-CoA to form malonyl-CoA. The polypeptide is Acetyl-coenzyme A carboxylase carboxyl transferase subunit beta (Bacillus mycoides (strain KBAB4) (Bacillus weihenstephanensis)).